The primary structure comprises 1008 residues: GGFDFSFLPQPPQEKGHDGGRYYRAKQGVGLGPGPMGLMGPRGPPGASGAPGPQGFPAGEPGEPGQTGPAGARGPAGPPGKADGHPGKPGRPGERGVVGPQGARGFPGTPGLPGFKGIRGHNGLDGLKGQPGAPGVKGEPGAPGENGTPGQTGARGLPGERGRVGAPGPAGARGSDGSVGPVGPAGPIGSAGPPGFPGAPGPKGELGPVGNTGPSGPAGPRGEQGLPGVSGPVGPPGNPGANGLTGAKGAAGLPGVAGAPGLPGPRGIPGPVGASGATGARGLVGEPGPAGSKGESGNKGEPGSAGPQGPPGSSGEEGKRGPNGESGSTGPTGPPGLRGGPGSRGLPGADGRAGVIGPAGARGASGPAGVRGPSGDTGRPGEPGLMGARGLPGSPGNVGPAGKEGPAGLPGIDGRPGPIGPAGARGEAGNIGFPGPKGPAGDPGKGEKGHAGLAGNRGQGGKGEQGPAGPPGFQGLPGPAGTTGEAGKPGERGIPGEFGLPGPAGPRGERGPPGESGAVGPSGAIGSRGPSGPPGPDGNKGEPGVVGAPGTAGPAGSGGLPGERGAAGMPGGKGEKGELGLRGEVGTTGRDGARGAPGAVGAPGPAGATGDRGEAGAAGPAGPAGPRGSPGERGEVGPAGPNGFAGPAGAAGQPGAKGERGTKGPKGENGIVGPTGPVGSAGPAGPNGPAGPAGSRGDGGPPGATGFPGAAGRTGPPGPSGITGPPGPPGAAGKEGLRGPRGDQGPVGRTGETGAGGPPGFTGEKGPSGEPGTAGPPGTAGPQGLLGAPGILGLPGSRGERGLPGVAGAVGEPGPLGIGPPGARGPPGAVGSPGVNGAPGNPGSDGPPGRDGLPGHKGERGYAGNAGPVGAAGAPGPHGTVGPAGKHGNRGEPGPVGSVGPVGALGPRGPSGPQGIRGDKGEPGDKGPRGLPGLKGHNGLQGLPGLAGQHGDQGPGPVGPAGPRGPAGPSGPAGKDGRTGHPGAVGPAGIRGSGGGYDFGYEGDFYRA.

Residues 1–999 form a disordered region; sequence GGFDFSFLPQ…IRGSGGGYDF (999 aa). 4 positions are modified to 4-hydroxyproline: Pro-9, Pro-12, Pro-45, and Pro-51. Positions 38-81 are enriched in low complexity; that stretch reads LMGPRGPPGASGAPGPQGFPAGEPGEPGQTGPAGARGPAGPPGK. The segment covering 82 to 94 has biased composition (basic and acidic residues); it reads ADGHPGKPGRPGE. The residue at position 116 (Lys-116) is a 5-hydroxylysine; alternate. Lys-116 carries O-linked (Gal...) hydroxylysine; alternate glycosylation. 3 stretches are compositionally biased toward low complexity: residues 164-193, 239-260, and 301-314; these read VGAP…SAGP, PGAN…AGAP, and EPGS…PGSS. Residues 336-345 are compositionally biased toward gly residues; that stretch reads GLRGGPGSRG. The segment covering 358 to 374 has biased composition (low complexity); that stretch reads PAGARGASGPAGVRGPS. 2 positions are modified to 4-hydroxyproline: Pro-380 and Pro-383. The segment covering 409–428 has biased composition (low complexity); sequence LPGIDGRPGPIGPAGARGEA. Gly residues predominate over residues 455-466; it reads GNRGQGGKGEQG. Low complexity-rich tracts occupy residues 513–530 and 542–552; these read PGES…SRGP and EPGVVGAPGTA. Gly residues predominate over residues 553-562; that stretch reads GPAGSGGLPG. Composition is skewed to low complexity over residues 582-629 and 636-656; these read RGEV…PRGS and VGPA…QPGA. The span at 657–666 shows a compositional bias: basic and acidic residues; sequence KGERGTKGPK. Residues 674 to 684 are compositionally biased toward low complexity; it reads PTGPVGSAGPA. Positions 694 to 703 are enriched in gly residues; it reads GSRGDGGPPG. Low complexity predominate over residues 704–714; that stretch reads ATGFPGAAGRT. Over residues 751 to 760 the composition is skewed to gly residues; sequence GETGAGGPPG. Low complexity-rich tracts occupy residues 768–795, 803–813, 826–842, 862–884, and 892–907; these read SGEP…LGLP, LPGVAGAVGEP, PPGA…PGNP, YAGN…VGPA, and EPGP…ALGP. Positions 917 to 928 are enriched in basic and acidic residues; the sequence is RGDKGEPGDKGP. Over residues 989 to 998 the composition is skewed to gly residues; the sequence is GIRGSGGGYD.

It belongs to the fibrillar collagen family. Trimers of one alpha 2(I) and two alpha 1(I) chains. Interacts (via C-terminus) with TMEM131 (via PapD-L domain); the interaction is direct and is involved in assembly and TRAPPIII ER-to-Golgi transport complex-dependent secretion of collagen. In terms of processing, prolines at the third position of the tripeptide repeating unit (G-X-Y) are hydroxylated in some or all of the chains. As to expression, expressed in bones.

It localises to the secreted. The protein resides in the extracellular space. The protein localises to the extracellular matrix. Functionally, type I collagen is a member of group I collagen (fibrillar forming collagen). In Nothrotheriops shastensis (Shasta ground sloth), this protein is Collagen alpha-2(I) chain.